The sequence spans 365 residues: NADH-quinone oxidoreductase subunit 8 (365 aa).

9 consecutive transmembrane segments (helical) span residues 11-31, 80-100, 120-140, 157-177, 192-212, 252-272, 273-293, 310-330, and 336-356; these read WMVALKALLVVVGLLTAFAFM, FLFVLAPLISVVFALLAFGLI, LGILYLFAVSELAVYGIFLSG, ASLISYELGLGLALLAPVLLV, HGWLFLYAFPAFLVYLIASMA, FITASALIPTLFLGGWTMPVL, EVPYLWMFLKIAFFLFFFIWI, WGFLFPLALLWFLVTALVVAL, and YLLYLSALSFLVLLGAVLYTP.

Belongs to the complex I subunit 1 family. As to quaternary structure, NDH-1 is composed of 15 different subunits, Nqo1 to Nqo15. The complex has a L-shaped structure, with the hydrophobic arm (subunits Nqo7, Nqo8 and Nqo10 to Nqo14) embedded in the membrane and the hydrophilic peripheral arm (subunits Nqo1 to Nqo6, Nqo9 and Nqo15) protruding into the bacterial cytoplasm. The hydrophilic domain contains all the redox centers.

The protein resides in the cell inner membrane. The catalysed reaction is a quinone + NADH + 5 H(+)(in) = a quinol + NAD(+) + 4 H(+)(out). NDH-1 shuttles electrons from NADH, via FMN and iron-sulfur (Fe-S) centers, to quinones in the respiratory chain. The immediate electron acceptor for the enzyme in this species is menaquinone. Couples the redox reaction to proton translocation (for every two electrons transferred, four hydrogen ions are translocated across the cytoplasmic membrane), and thus conserves the redox energy in a proton gradient required for the synthesis of ATP. The chain is NADH-quinone oxidoreductase subunit 8 (nqo8) from Thermus thermophilus (strain ATCC 27634 / DSM 579 / HB8).